A 183-amino-acid chain; its full sequence is Adenylate kinase (183 aa).

12-17 serves as a coordination point for ATP; it reads GAGKGT. Positions 32–61 are NMP; sequence STGDLLRSEVSAGSALGQEAEAVMNRGELV. Residues T33, R38, 59 to 61, 86 to 89, and Q93 contribute to the AMP site; these read ELV and GFPR. The segment at 127-133 is LID; sequence ARGRADD. Position 128 (R128) interacts with ATP. AMP-binding residues include R130 and R141. G169 is a binding site for ATP.

It belongs to the adenylate kinase family. Monomer.

It localises to the cytoplasm. It catalyses the reaction AMP + ATP = 2 ADP. Its pathway is purine metabolism; AMP biosynthesis via salvage pathway; AMP from ADP: step 1/1. Functionally, catalyzes the reversible transfer of the terminal phosphate group between ATP and AMP. Plays an important role in cellular energy homeostasis and in adenine nucleotide metabolism. The sequence is that of Adenylate kinase from Synechococcus sp. (strain WH7803).